A 456-amino-acid chain; its full sequence is Probable flavin-containing monoamine oxidase A (456 aa).

Cys394 is modified (S-8alpha-FAD cysteine).

The protein belongs to the flavin monoamine oxidase family. The cofactor is FAD.

The catalysed reaction is a secondary aliphatic amine + O2 + H2O = a primary amine + an aldehyde + H2O2. This chain is Probable flavin-containing monoamine oxidase A (maoA), found in Dictyostelium discoideum (Social amoeba).